Here is a 728-residue protein sequence, read N- to C-terminus: MRSLLLLASLAWLLLAQAKDDAKLEDNLLVLTVATKETEGFRRFKRSAQFFNYKIQSLGLGEDWSAAGGPSAAGGGQKVRLLKKALKKYADKEDLVILFVDSYDVVFASGPRELLKKFQQAKSRVVFSAEELIYPDRRLEAKYPTVPDGKRFLGSGGFIGYAPSLSKLVAEWEGQDNDSDQLFYTKIFLDPEKREQINISLDHRCRIFQNLDGALDEVVLKFEMGHVRARNLAYDTLPVVIHGNGPTKLQVNYLGNYIPRFWTFETGCTVCDEGLRSLKGIGDEALPTVLVGVFIEQPTPFLSLFFRRLLHLRYPQKQMRLFIHNQEQHHKLQVEQFLAEHGGEYQSVKLVGPEVRMANADARNMGADLCRQDQTCTYYFSVDADVALTEPNSLRLLIEQNKNVIAPLMTRHGRLWSNFWGALSADGYYARSEDYVDIVQGRRVGVWNVPYISNIYLIKGSALRAELRHVDLFHYSKLDPDMSFCANVRQQEVFMFLTNRHTFGHLLSLDNYQTTHLHNDLWEVFSNPQDWKEKYIHENYTKALAGKLVETPCPDVYWFPIFTEVACDELVEEMEHYGQWSLGDNKDNRIQGGYENVPTIDIHMNQITFEREWHKFLVEYIAPLTEKLYPGYYTKAQFDLAFVVRYKPDEQPSLMPHHDASTFTINIALNRVGEDYEGGGCRFLRYNCSVRAPRKGWALMHPGRLTHYHEGLPTTKGTRYIAVSFVDP.

A signal peptide spans 1 to 18 (MRSLLLLASLAWLLLAQA). Asn-177, Asn-198, and Asn-539 each carry an N-linked (GlcNAc...) asparagine glycan. The Fe2OG dioxygenase domain maps to 637 to 728 (QFDLAFVVRY…RYIAVSFVDP (92 aa)). His-657 and Asp-659 together coordinate Fe cation. A glycan (N-linked (GlcNAc...) asparagine) is linked at Asn-687. A Fe cation-binding site is contributed by His-709. Residue Arg-719 is part of the active site.

Homodimer. Identified in a complex with P3H3 and P3H4. Fe(2+) is required as a cofactor. L-ascorbate serves as cofactor.

Its subcellular location is the rough endoplasmic reticulum membrane. It catalyses the reaction L-lysyl-[collagen] + 2-oxoglutarate + O2 = (5R)-5-hydroxy-L-lysyl-[collagen] + succinate + CO2. Part of a complex composed of PLOD1, P3H3 and P3H4 that catalyzes hydroxylation of lysine residues in collagen alpha chains and is required for normal assembly and cross-linkling of collagen fibrils. Forms hydroxylysine residues in -Xaa-Lys-Gly- sequences in collagens. These hydroxylysines serve as sites of attachment for carbohydrate units and are essential for the stability of the intermolecular collagen cross-links. In Rattus norvegicus (Rat), this protein is Procollagen-lysine,2-oxoglutarate 5-dioxygenase 1 (Plod1).